The sequence spans 111 residues: Universal stress protein B (111 aa).

2 helical membrane-spanning segments follow: residues 1 to 21 (MISTVALFWALCVVCVVNMAR) and 90 to 110 (FILTSALCGLVVVSLVALMLW).

It belongs to the universal stress protein B family.

The protein resides in the cell inner membrane. The chain is Universal stress protein B from Yersinia pseudotuberculosis serotype O:1b (strain IP 31758).